The sequence spans 82 residues: Small ribosomal subunit protein bS16 (82 aa).

It belongs to the bacterial ribosomal protein bS16 family.

The chain is Small ribosomal subunit protein bS16 from Saccharophagus degradans (strain 2-40 / ATCC 43961 / DSM 17024).